A 506-amino-acid chain; its full sequence is ATP synthase subunit alpha, plastid (506 aa).

170–177 contacts ATP; sequence GDRQTGKT.

Belongs to the ATPase alpha/beta chains family. In terms of assembly, F-type ATPases have 2 components, CF(1) - the catalytic core - and CF(0) - the membrane proton channel. CF(1) has five subunits: alpha(3), beta(3), gamma(1), delta(1), epsilon(1). CF(0) has four main subunits: a, b, b' and c.

The protein localises to the plastid membrane. It catalyses the reaction ATP + H2O + 4 H(+)(in) = ADP + phosphate + 5 H(+)(out). Functionally, produces ATP from ADP in the presence of a proton gradient across the membrane. The alpha chain is a regulatory subunit. This chain is ATP synthase subunit alpha, plastid, found in Prototheca wickerhamii.